Reading from the N-terminus, the 512-residue chain is Multidrug resistance protein 3 (512 aa).

The next 14 membrane-spanning stretches (helical) occupy residues 13–33 (FVVL…TIVA), 48–68 (KFAW…PIYG), 79–99 (FFLF…IAQT), 109–129 (IQGI…FDLF), 139–159 (GMFG…GAII), 163–183 (ISWH…LFFI), 200–220 (WGGA…LELG), 228–248 (SIQI…FFIV), 272–292 (ILAF…PIFV), 304–324 (GFIL…GGIF), 333–353 (LMLI…NMTP), 358–378 (VWLT…FSLL), 399–421 (SFLR…TNVF), and 475–495 (ITYV…TILF).

Belongs to the major facilitator superfamily. EmrB family.

It localises to the cell membrane. In terms of biological role, confers resistance to puromycin, tosufloxacin and norfloxacin. In Bacillus subtilis (strain 168), this protein is Multidrug resistance protein 3 (bmr3).